The chain runs to 657 residues: Translation factor GUF1, mitochondrial (657 aa).

A mitochondrion-targeting transit peptide spans 1–21 (MLKTLGLRSLCPSLGGRGFRR). The 185-residue stretch at 56–240 (ENYRNFSIVA…TIVDRIPPPT (185 aa)) folds into the tr-type G domain. GTP-binding positions include 65 to 72 (AHVDHGKS), 132 to 136 (DTPGH), and 186 to 189 (NKID).

Belongs to the TRAFAC class translation factor GTPase superfamily. Classic translation factor GTPase family. LepA subfamily.

The protein localises to the mitochondrion inner membrane. It catalyses the reaction GTP + H2O = GDP + phosphate + H(+). Functionally, promotes mitochondrial protein synthesis. May act as a fidelity factor of the translation reaction, by catalyzing a one-codon backward translocation of tRNAs on improperly translocated ribosomes. Binds to mitochondrial ribosomes in a GTP-dependent manner. The polypeptide is Translation factor GUF1, mitochondrial (Candida glabrata (strain ATCC 2001 / BCRC 20586 / JCM 3761 / NBRC 0622 / NRRL Y-65 / CBS 138) (Yeast)).